A 469-amino-acid chain; its full sequence is Glutamine synthetase (469 aa).

The GS beta-grasp domain maps to 15 to 96 (EDVKFVDVRF…INFFIHDPIT (82 aa)). The region spanning 104-469 (PRNVAKKAEA…PHEFEMYFDV (366 aa)) is the GS catalytic domain. Residues glutamate 129 and glutamate 131 each contribute to the Mg(2+) site. Glutamate 205 serves as a coordination point for ATP. Mg(2+) is bound by residues glutamate 210 and glutamate 218. ATP is bound at residue 221–223 (YKF). L-glutamate-binding positions include 262 to 263 (NG) and glycine 263. Histidine 267 is a Mg(2+) binding site. Residues 269-271 (HQS) and serine 271 each bind ATP. Arginine 320, glutamate 326, and arginine 338 together coordinate L-glutamate. Arginine 338, arginine 343, and lysine 352 together coordinate ATP. Glutamate 357 is a Mg(2+) binding site. Arginine 359 lines the L-glutamate pocket. An O-AMP-tyrosine modification is found at tyrosine 397.

This sequence belongs to the glutamine synthetase family. Oligomer of 12 subunits arranged in the form of two hexagons. Mg(2+) serves as cofactor.

The protein resides in the cytoplasm. The enzyme catalyses L-glutamate + NH4(+) + ATP = L-glutamine + ADP + phosphate + H(+). Its activity is regulated as follows. The activity of this enzyme could be controlled by adenylation under conditions of abundant glutamine. Its function is as follows. Catalyzes the ATP-dependent biosynthesis of glutamine from glutamate and ammonia. Complements L-glutamine auxotrophy of an E.coli glnA mutant. This is Glutamine synthetase from Streptomyces coelicolor (strain ATCC BAA-471 / A3(2) / M145).